Here is a 42-residue protein sequence, read N- to C-terminus: Alpha-lactalbumin I (42 aa).

Residues 1–42 (IDYRKCQASQILKEHGMDKVIPLPELVCTMFHISGLSPQAEV) form the C-type lysozyme domain.

This sequence belongs to the glycosyl hydrolase 22 family. Lactose synthase (LS) is a heterodimer of a catalytic component, beta1,4-galactosyltransferase (beta4Gal-T1) and a regulatory component, alpha-lactalbumin (LA). In terms of tissue distribution, mammary gland specific. Secreted in milk.

It localises to the secreted. Its function is as follows. Regulatory subunit of lactose synthase, changes the substrate specificity of galactosyltransferase in the mammary gland making glucose a good acceptor substrate for this enzyme. This enables LS to synthesize lactose, the major carbohydrate component of milk. In other tissues, galactosyltransferase transfers galactose onto the N-acetylglucosamine of the oligosaccharide chains in glycoproteins. The sequence is that of Alpha-lactalbumin I (LALBA) from Macropus giganteus (Eastern gray kangaroo).